The following is a 288-amino-acid chain: Oxaloacetate decarboxylase (288 aa).

S47 contributes to the substrate binding site. D85 serves as a coordination point for Mg(2+). Residues R156 and H232 each coordinate substrate.

This sequence belongs to the isocitrate lyase/PEP mutase superfamily. Oxaloacetate decarboxylase family. As to quaternary structure, homotetramer; dimer of dimers. It depends on Mg(2+) as a cofactor.

It catalyses the reaction oxaloacetate + H(+) = pyruvate + CO2. Catalyzes the decarboxylation of oxaloacetate into pyruvate. Seems to play a role in maintaining cellular concentrations of bicarbonate and pyruvate. This chain is Oxaloacetate decarboxylase, found in Bradyrhizobium diazoefficiens (strain JCM 10833 / BCRC 13528 / IAM 13628 / NBRC 14792 / USDA 110).